The following is a 175-amino-acid chain: Large ribosomal subunit protein uL10 (175 aa).

Belongs to the universal ribosomal protein uL10 family. Part of the ribosomal stalk of the 50S ribosomal subunit. The N-terminus interacts with L11 and the large rRNA to form the base of the stalk. The C-terminus forms an elongated spine to which L12 dimers bind in a sequential fashion forming a multimeric L10(L12)X complex.

Functionally, forms part of the ribosomal stalk, playing a central role in the interaction of the ribosome with GTP-bound translation factors. In Prochlorococcus marinus (strain MIT 9313), this protein is Large ribosomal subunit protein uL10.